The sequence spans 861 residues: Leucine--tRNA ligase (861 aa).

Residues 42-52 (PYPSGNLHMGH) carry the 'HIGH' region motif. The short motif at 620 to 624 (KMSKS) is the 'KMSKS' region element. Position 623 (Lys623) interacts with ATP.

It belongs to the class-I aminoacyl-tRNA synthetase family.

It is found in the cytoplasm. It catalyses the reaction tRNA(Leu) + L-leucine + ATP = L-leucyl-tRNA(Leu) + AMP + diphosphate. This chain is Leucine--tRNA ligase, found in Baumannia cicadellinicola subsp. Homalodisca coagulata.